Consider the following 49-residue polypeptide: Large ribosomal subunit protein bL33A (49 aa).

It belongs to the bacterial ribosomal protein bL33 family.

The polypeptide is Large ribosomal subunit protein bL33A (Staphylococcus aureus (strain COL)).